Here is a 213-residue protein sequence, read N- to C-terminus: Urease accessory protein UreE (213 aa).

The tract at residues 170-213 is disordered; that stretch reads EHHGHSHSHSHSHSHDHDHDHDHDHDHDHQHGPSCSHGHHHGHR. Basic and acidic residues predominate over residues 182-200; sequence HSHDHDHDHDHDHDHDHQH.

The protein belongs to the UreE family.

The protein localises to the cytoplasm. In terms of biological role, involved in urease metallocenter assembly. Binds nickel. Probably functions as a nickel donor during metallocenter assembly. The protein is Urease accessory protein UreE of Burkholderia mallei (strain NCTC 10229).